We begin with the raw amino-acid sequence, 501 residues long: Uridine kinase (501 aa).

Ser-17 is modified (phosphoserine). 63–70 is a binding site for ATP; it reads GASGSGKT. Ser-276 carries the post-translational modification Phosphoserine.

It belongs to the uridine kinase family.

Its subcellular location is the cytoplasm. It is found in the nucleus. It carries out the reaction uridine + ATP = UMP + ADP + H(+). The catalysed reaction is cytidine + ATP = CMP + ADP + H(+). It participates in pyrimidine metabolism; CTP biosynthesis via salvage pathway; CTP from cytidine: step 1/3. It functions in the pathway pyrimidine metabolism; UMP biosynthesis via salvage pathway; UMP from uridine: step 1/1. Its function is as follows. Catalyzes the conversion of uridine into UMP and cytidine into CMP in the pyrimidine salvage pathway. The polypeptide is Uridine kinase (URK1) (Saccharomyces cerevisiae (strain ATCC 204508 / S288c) (Baker's yeast)).